A 434-amino-acid polypeptide reads, in one-letter code: Arginine/serine-rich coiled-coil protein 2 (434 aa).

The segment covering 1-27 (MAASDTERDGLAPEKTSPDRDKKKEQS) has biased composition (basic and acidic residues). Residues 1–230 (MAASDTERDG…PSPPPFRGRN (230 aa)) are disordered. An N-acetylalanine modification is found at Ala-2. Ser-4 is modified (phosphoserine). Residues Thr-6 and Thr-16 each carry the phosphothreonine modification. Ser-17, Ser-30, and Ser-32 each carry phosphoserine. Residues 35-51 (ASKHHYSRSRSRSRERK) are compositionally biased toward basic residues. The span at 66 to 111 (RSKEGRRHESKDKSSKKHKSEEHNDKEHSSDKGRERLNSSENGEDR) shows a compositional bias: basic and acidic residues. Ser-104 bears the Phosphoserine mark. Over residues 112 to 214 (HKRKERKSSR…KRIEKPRRFS (103 aa)) the composition is skewed to basic residues. A coiled-coil region spans residues 230 to 270 (NTAMDAQEALARRLERAKKLQEQREKEMVEKQKQQEIAAAA). Lys-375 participates in a covalent cross-link: Glycyl lysine isopeptide (Lys-Gly) (interchain with G-Cter in SUMO1); alternate. Lys-375 participates in a covalent cross-link: Glycyl lysine isopeptide (Lys-Gly) (interchain with G-Cter in SUMO2); alternate. A Phosphoserine modification is found at Ser-376.

The protein belongs to the RSRC2 family.

In Homo sapiens (Human), this protein is Arginine/serine-rich coiled-coil protein 2 (RSRC2).